We begin with the raw amino-acid sequence, 130 residues long: MSMQDTLADMFTRIRNAQMAAKTSVSMPSSKMKSSIAAVLREEGYVGDFSVDEAVKPTLTIELKYYEGKPVIEQIKRASRPSLRQYKGTSALPKVEAGLGVAIISTSKGVMTDRAARAAGIGGEVICTVF.

The protein belongs to the universal ribosomal protein uS8 family. As to quaternary structure, part of the 30S ribosomal subunit. Contacts proteins S5 and S12.

Its function is as follows. One of the primary rRNA binding proteins, it binds directly to 16S rRNA central domain where it helps coordinate assembly of the platform of the 30S subunit. This Marinomonas sp. (strain MWYL1) protein is Small ribosomal subunit protein uS8.